The chain runs to 126 residues: Cornifin alpha (126 aa).

Ser2 is modified (N-acetylserine). 13 repeat units span residues 3–14 (SQQQKQPCTLPP), 18–29 (QHQVKQPCQPPP), 31–38 (EPCVPKTK), 39–46 (EPCQPKVP), 47–54 (EPCQPKVP), 55–62 (EPCQPKVP), 63–70 (EPCQPKVP), 71–78 (QPCQPKVP), 79–86 (EPCQPKVP), 87–94 (EPCQPKVP), 95–102 (EPCQPKVP), 103–110 (EPCQSKVP), and 111–118 (QPCQPKVP). Residues 3 to 29 (SQQQKQPCTLPPQLQQHQVKQPCQPPP) form a 2 X 12 AA approximate repeats region. Residues 20-43 (QVKQPCQPPPQEPCVPKTKEPCQP) form a disordered region. The segment at 31 to 122 (EPCVPKTKEP…CQPKVPEPCQ (92 aa)) is 11 X 8 AA approximate tandem repeats. A disordered region spans residues 104-126 (PCQSKVPQPCQPKVPEPCQTKQK).

Belongs to the cornifin (SPRR) family. In terms of tissue distribution, suprabasal layers of squamous-differentiated tissues such as epidermis, esophagus, tongue and trachea.

The protein localises to the cytoplasm. Cross-linked envelope protein of keratinocytes. It is a keratinocyte protein that first appears in the cell cytosol, but ultimately becomes cross-linked to membrane proteins by transglutaminase. All that results in the formation of an insoluble envelope beneath the plasma membrane. This chain is Cornifin alpha, found in Oryctolagus cuniculus (Rabbit).